The primary structure comprises 295 residues: Bifunctional protein FolD (295 aa).

NADP(+) is bound by residues 175–177 and isoleucine 243; that span reads GVS.

This sequence belongs to the tetrahydrofolate dehydrogenase/cyclohydrolase family. Homodimer.

The catalysed reaction is (6R)-5,10-methylene-5,6,7,8-tetrahydrofolate + NADP(+) = (6R)-5,10-methenyltetrahydrofolate + NADPH. It catalyses the reaction (6R)-5,10-methenyltetrahydrofolate + H2O = (6R)-10-formyltetrahydrofolate + H(+). It participates in one-carbon metabolism; tetrahydrofolate interconversion. Catalyzes the oxidation of 5,10-methylenetetrahydrofolate to 5,10-methenyltetrahydrofolate and then the hydrolysis of 5,10-methenyltetrahydrofolate to 10-formyltetrahydrofolate. This is Bifunctional protein FolD from Xylella fastidiosa (strain 9a5c).